The chain runs to 70 residues: Potassium channel toxin kappa-KTx 2.5 (70 aa).

Residues 1–26 (MESSRKSYVLMLFLAFVIMNVCSVSG) form the signal peptide. Residues 27-42 (EPKDGEIAGFEMEEAR) constitute a propeptide that is removed on maturation. 2 disulfides stabilise this stretch: cysteine 46–cysteine 64 and cysteine 50–cysteine 60.

Belongs to the short scorpion toxin superfamily. Potassium channel inhibitor kappa-KTx family. Kappa-KTx 2 subfamily. As to expression, expressed by the venom gland.

The protein localises to the secreted. Voltage-independently blocks potassium currents on hKv1.1/KCNA1 (IC(50)=217 uM), and hKv1.4/KCNA4 (IC(50)=71 uM) (expressed in CHO cells). In Opisthacanthus cayaporum (South American scorpion), this protein is Potassium channel toxin kappa-KTx 2.5.